The chain runs to 92 residues: Small nuclear ribonucleoprotein E (92 aa).

Residues isoleucine 18–asparagine 92 form the Sm domain.

It belongs to the snRNP Sm proteins family. As to quaternary structure, core component of the spliceosomal U1, U2, U4 and U5 small nuclear ribonucleoproteins (snRNPs), the building blocks of the spliceosome. Most spliceosomal snRNPs contain a common set of Sm proteins, SNRPB, SNRPD1, SNRPD2, SNRPD3, SNRPE, SNRPF and SNRPG that assemble in a heptameric protein ring on the Sm site of the small nuclear RNA to form the core snRNP. Component of the U1 snRNP. The U1 snRNP is composed of the U1 snRNA and the 7 core Sm proteins SNRPB, SNRPD1, SNRPD2, SNRPD3, SNRPE, SNRPF and SNRPG, and at least three U1 snRNP-specific proteins SNRNP70/U1-70K, SNRPA/U1-A and SNRPC/U1-C. Component of the U4/U6-U5 tri-snRNP complex composed of the U4, U6 and U5 snRNAs and at least PRPF3, PRPF4, PRPF6, PRPF8, PRPF31, SNRNP200, TXNL4A, SNRNP40, SNRPB, SNRPD1, SNRPD2, SNRPD3, SNRPE, SNRPF, SNRPG, DDX23, CD2BP2, PPIH, SNU13, EFTUD2, SART1 and USP39, plus LSM2, LSM3, LSM4, LSM5, LSM6, LSM7 and LSM8. Component of the U7 snRNP complex, or U7 Sm protein core complex, that is composed of the U7 snRNA and at least LSM10, LSM11, SNRPB, SNRPD3, SNRPE, SNRPF and SNRPG; the complex does not contain SNRPD1 and SNRPD2. Component of the minor spliceosome, which splices U12-type introns. Part of the SMN-Sm complex that contains SMN1, GEMIN2/SIP1, DDX20/GEMIN3, GEMIN4, GEMIN5, GEMIN6, GEMIN7, GEMIN8, STRAP/UNRIP and the Sm proteins SNRPB, SNRPD1, SNRPD2, SNRPD3, SNRPE, SNRPF and SNRPG; catalyzes core snRNPs assembly. Forms a 6S pICln-Sm complex composed of CLNS1A/pICln, SNRPD1, SNRPD2, SNRPE, SNRPF and SNRPG; ring-like structure where CLNS1A/pICln mimics additional Sm proteins and which is unable to assemble into the core snRNP. Interacts with SMN1; the interaction is direct. Interacts with GEMIN2 (via N-terminus); the interaction is direct. Interacts with SNRPF; the interaction is direct. Interacts with SNRPG; the interaction is direct.

The protein resides in the cytoplasm. It localises to the cytosol. Its subcellular location is the nucleus. In terms of biological role, plays a role in pre-mRNA splicing as a core component of the spliceosomal U1, U2, U4 and U5 small nuclear ribonucleoproteins (snRNPs), the building blocks of the spliceosome. Component of both the pre-catalytic spliceosome B complex and activated spliceosome C complexes. As a component of the minor spliceosome, involved in the splicing of U12-type introns in pre-mRNAs. As part of the U7 snRNP it is involved in histone 3'-end processing. This is Small nuclear ribonucleoprotein E (SNRPE) from Sus scrofa (Pig).